A 1072-amino-acid chain; its full sequence is MPKYKDISKVLVIGSGPIIIGQAAEFDYSGTQACKSLKEEGVQVVLVNNNPATIMTDTDIADIVYIENPTVEVVEKIIAKERPDGILATLGGQTGLNLAVKLKEAGILDKYNVKLLGTSVESIKTAEDRELFKRKMQEIGEPVAESVTVTNVEDALKFAKNYGYPLIIRPAYTLGGTGGGIAHNDEELISIVDLGLKKSMVGEVLVEKSLYGWKEIEFEVMRDAADNCITICSMENFDPVGVHTGDSIVVAPAQTLSDYEYQMLRSASIKIIRALKIEGGCNIQFALDPQSHKYYVIEVNPRVSRSSALASKATGYPIAKIAAKIAIGLRLDEIKNPVTGKTTAFFEPALDYVVTKIPRWPFDKFYTTDRRIGTQMKATGEVMAIERSFEASLLKAVRSLEIKAYGLRLDSVRGMGTKEILEDISVPNDMRLFYIAEALRRNIDIDYINDVTKIDKWFLNKLSNIVNMEKEIEENELSKEILKKAKRMGFSDREIATIKGIKEEDVRTLRKKYGIYPSYKMVDTCAAEFESITQYIYSTYCEEDEVETHDIPKVIVIGSGPIRIGQGIEFDYCSVKALWALKETGIKSIIINNNPETVSTDFDTGDRLYFEPITLEDVLNIYEKEKPLGVMVMFGGQTAINLTEELVKNEVKILGTSFKSIDISEDREKFSKLLKELNINQPKGGYALTVEDAKDIALKLGFPLLVRPSYVIGGQSMEKVNTLQELIDYVKHATEVSPGKPVLIDKYIDGREVEVDAVSDGECVLIPGIMEHIERTGVHSGDSFSIYPARNLTEREINTIIEYTEKISKALNVKGLINIQFAVKEGTVYVLEVNPRASRTVPIMSKATGVPMVKLAVEVALGKKLKELGYKGGLWPQTPYTVVKAPVFSMEKLTDVEVSLSPEMKSTGEIMGIDLSYEGALYKALEGAGLKIPKKGKILLSIAERDFQEAVSLVEKLQSLGYEIYATYRTGKYFSLMGIHANIMSLDHAIKLLKNGYFDAVVNTPTKGKKPDNAGFKLRRTAVEYRIPLFTSIDTIKAALNAVSKVNVNGLSVLSMNEYQEIQKDNVKNLVL.

Positions 1–401 (MPKYKDISKV…SLLKAVRSLE (401 aa)) are carboxyphosphate synthetic domain. ATP contacts are provided by Arg-129, Arg-169, Gly-175, Gly-176, Lys-208, Leu-210, Glu-215, Gly-241, Val-242, His-243, Gln-284, and Glu-298. An ATP-grasp 1 domain is found at 133-327 (KRKMQEIGEP…IAKIAAKIAI (195 aa)). Mg(2+) contacts are provided by Gln-284, Glu-298, and Asn-300. Positions 284, 298, and 300 each coordinate Mn(2+). Residues 402-544 (IKAYGLRLDS…YIYSTYCEED (143 aa)) are oligomerization domain. Residues 545–929 (EVETHDIPKV…ALYKALEGAG (385 aa)) form a carbamoyl phosphate synthetic domain region. The ATP-grasp 2 domain maps to 671-861 (SKLLKELNIN…MVKLAVEVAL (191 aa)). Residues Arg-707, Lys-746, Ile-748, Glu-752, Gly-777, Val-778, His-779, Ser-780, Gln-820, and Glu-832 each coordinate ATP. Residues Gln-820, Glu-832, and Asn-834 each coordinate Mg(2+). Mn(2+) is bound by residues Gln-820, Glu-832, and Asn-834. The MGS-like domain maps to 930–1072 (LKIPKKGKIL…QKDNVKNLVL (143 aa)). The interval 930–1072 (LKIPKKGKIL…QKDNVKNLVL (143 aa)) is allosteric domain.

Belongs to the CarB family. As to quaternary structure, composed of two chains; the small (or glutamine) chain promotes the hydrolysis of glutamine to ammonia, which is used by the large (or ammonia) chain to synthesize carbamoyl phosphate. Tetramer of heterodimers (alpha,beta)4. Mg(2+) is required as a cofactor. Requires Mn(2+) as cofactor.

It catalyses the reaction hydrogencarbonate + L-glutamine + 2 ATP + H2O = carbamoyl phosphate + L-glutamate + 2 ADP + phosphate + 2 H(+). It carries out the reaction hydrogencarbonate + NH4(+) + 2 ATP = carbamoyl phosphate + 2 ADP + phosphate + 2 H(+). It functions in the pathway amino-acid biosynthesis; L-arginine biosynthesis; carbamoyl phosphate from bicarbonate: step 1/1. Its pathway is pyrimidine metabolism; UMP biosynthesis via de novo pathway; (S)-dihydroorotate from bicarbonate: step 1/3. Its function is as follows. Large subunit of the glutamine-dependent carbamoyl phosphate synthetase (CPSase). CPSase catalyzes the formation of carbamoyl phosphate from the ammonia moiety of glutamine, carbonate, and phosphate donated by ATP, constituting the first step of 2 biosynthetic pathways, one leading to arginine and/or urea and the other to pyrimidine nucleotides. The large subunit (synthetase) binds the substrates ammonia (free or transferred from glutamine from the small subunit), hydrogencarbonate and ATP and carries out an ATP-coupled ligase reaction, activating hydrogencarbonate by forming carboxy phosphate which reacts with ammonia to form carbamoyl phosphate. This chain is Carbamoyl phosphate synthase large chain, found in Caldanaerobacter subterraneus subsp. tengcongensis (strain DSM 15242 / JCM 11007 / NBRC 100824 / MB4) (Thermoanaerobacter tengcongensis).